A 218-amino-acid polypeptide reads, in one-letter code: NADH dehydrogenase [ubiquinone] iron-sulfur protein 7, mitochondrial (218 aa).

Residues 34-48 (LPALSPSTSPTSYTR) are compositionally biased toward low complexity. Residues 34 to 61 (LPALSPSTSPTSYTRPGPPSTSPPPPGL) are disordered. Residues 49–60 (PGPPSTSPPPPG) show a composition bias toward pro residues. Cys-93, Cys-94, Cys-158, and Cys-188 together coordinate [4Fe-4S] cluster.

The protein belongs to the complex I 20 kDa subunit family. In terms of assembly, complex I is composed of at least 49 different subunits. This is a component of the iron-sulfur (IP) fragment of the enzyme. It depends on [4Fe-4S] cluster as a cofactor.

It localises to the mitochondrion. The enzyme catalyses a ubiquinone + NADH + 5 H(+)(in) = a ubiquinol + NAD(+) + 4 H(+)(out). Functionally, core subunit of the mitochondrial membrane respiratory chain NADH dehydrogenase (Complex I) that is believed to belong to the minimal assembly required for catalysis. Complex I functions in the transfer of electrons from NADH to the respiratory chain. The immediate electron acceptor for the enzyme is believed to be ubiquinone. In Arabidopsis thaliana (Mouse-ear cress), this protein is NADH dehydrogenase [ubiquinone] iron-sulfur protein 7, mitochondrial.